A 429-amino-acid chain; its full sequence is MKLQKPKGTQDILPAESAKWQYVEGFAREIFKRYNYAEVRTPIFEHYEVISRSVGDTTDIVTKEMYDFYDKGDRHITLRPEGTAPVVRSYVENKLFAPEVQKPSKFYYMGPMFRYERPQAGRLRQFHQIGVECFGSSNPATDVETISMAAYFLKEIGIQGVKLHLNTLGNPESRAAYRQALIDYLTPLKETLSKDSQRRLEENPLRVLDSKEKEDKVAVENAPSILDFLDEESQTHFDAVRQMLENLGVDYIIDTNMVRGLDYYNHTIFEFITEIEGNDLTVCAGGRYDGLVAYFGGPETAGFGFGLGVERLLLILEKQGVALPIENALDVYIAVLGDGANVKALELVQALRQQGFKAERDYLNRKLKAQFKSADVFAAKTLITLGESEVESGQVTVKNNQTREEVQVSLETISQNFSEIFEKLGFYTQ.

This sequence belongs to the class-II aminoacyl-tRNA synthetase family. Homodimer.

It is found in the cytoplasm. The enzyme catalyses tRNA(His) + L-histidine + ATP = L-histidyl-tRNA(His) + AMP + diphosphate + H(+). The chain is Histidine--tRNA ligase from Streptococcus pneumoniae (strain JJA).